The sequence spans 299 residues: Bifunctional protein FolD (299 aa).

NADP(+)-binding positions include 169–171, Ser-194, and Ile-235; that span reads GRS.

This sequence belongs to the tetrahydrofolate dehydrogenase/cyclohydrolase family. Homodimer.

It carries out the reaction (6R)-5,10-methylene-5,6,7,8-tetrahydrofolate + NADP(+) = (6R)-5,10-methenyltetrahydrofolate + NADPH. The enzyme catalyses (6R)-5,10-methenyltetrahydrofolate + H2O = (6R)-10-formyltetrahydrofolate + H(+). It participates in one-carbon metabolism; tetrahydrofolate interconversion. Functionally, catalyzes the oxidation of 5,10-methylenetetrahydrofolate to 5,10-methenyltetrahydrofolate and then the hydrolysis of 5,10-methenyltetrahydrofolate to 10-formyltetrahydrofolate. This is Bifunctional protein FolD from Trichormus variabilis (strain ATCC 29413 / PCC 7937) (Anabaena variabilis).